The chain runs to 505 residues: Histidine ammonia-lyase (505 aa).

A cross-link (5-imidazolinone (Ala-Gly)) is located at residues alanine 141–glycine 143. Serine 142 bears the 2,3-didehydroalanine (Ser) mark.

Belongs to the PAL/histidase family. Contains an active site 4-methylidene-imidazol-5-one (MIO), which is formed autocatalytically by cyclization and dehydration of residues Ala-Ser-Gly.

It is found in the cytoplasm. The enzyme catalyses L-histidine = trans-urocanate + NH4(+). It functions in the pathway amino-acid degradation; L-histidine degradation into L-glutamate; N-formimidoyl-L-glutamate from L-histidine: step 1/3. The chain is Histidine ammonia-lyase from Bacillus cereus (strain ATCC 10987 / NRS 248).